The chain runs to 300 residues: Protein Bel-1 (300 aa).

Disordered stretches follow at residues 1–20 (MDSYQEEEPVASTSGLQDLQ), 26–50 (VGPENAGEGDLVIAEEPEENPRRPR), and 185–237 (KPST…GDTV). Residues 11–20 (ASTSGLQDLQ) show a composition bias toward polar residues. A DNA-binding region spans residues 89-200 (SKSICKRLIL…PEGPKPRRRH (112 aa)). A compositionally biased stretch (basic and acidic residues) spans 201–210 (DPVLRCDMFE). Residues 211–222 (KHHKPRPKRSRK) are compositionally biased toward basic residues. The short motif at 214–223 (KPRPKRSRKR) is the Nuclear localization signal element. The segment at 224-300 (SIDHESCASS…PSGSGEHSVL (77 aa)) is transactivation domain.

As to quaternary structure, homodimer or homomultimer. Forms complexes with the host nuclear factors NFIA, NFIB, NFIC or NFIX.

The protein localises to the host nucleus. In terms of biological role, transcriptional transactivator that activates the viral internal promoter (IP), thereby enhancing its own expression. This transactivation is repressed by nuclear factor I. Also transactivates the long terminal repeat (LTR) promoter, thereby inducing structural gene expression, initiating the late phase of infection. It is therefore a key regulator of viral gene expression. It directly binds to and activates DNA target sites of viral promoters and those of distinct cellular genes. Required for viral replication. This chain is Protein Bel-1 (bel1), found in Pan troglodytes (Chimpanzee).